The following is a 1252-amino-acid chain: Immunoglobulin superfamily DCC subclass member 4 (1252 aa).

An N-terminal signal peptide occupies residues 1–22 (MARADTGRGLLVLTFCLLSARG). Over 23 to 956 (ELPLPQETTV…SDSLDVHAVT (934 aa)) the chain is Extracellular. 4 consecutive Ig-like domains span residues 27 to 136 (PQET…VAVV), 142 to 228 (EDFS…ASLT), 241 to 329 (QDVV…AELR), and 334 to 420 (PAIS…APLA). Disulfide bonds link C55–C120 and C163–C211. N88 carries N-linked (GlcNAc...) asparagine glycosylation. Residue N251 is glycosylated (N-linked (GlcNAc...) asparagine). 2 disulfide bridges follow: C264-C311 and C355-C404. Fibronectin type-III domains are found at residues 430–524 (APTR…TLDD), 526–622 (PSAA…TPGV), 631–742 (APAE…TPDL), 751–844 (PPAH…TLPD), and 849–944 (PPSD…TLQK). Positions 669–688 (TEEEADGDRPPGGRGDQAWD) are disordered. The chain crosses the membrane as a helical span at residues 957–977 (GIIVGVCLGLLCLLACMCAGL). The Cytoplasmic segment spans residues 978 to 1252 (RRSSHREALP…RAPVSSAQVP (275 aa)). T994 is modified (phosphothreonine).

This sequence belongs to the immunoglobulin superfamily. DCC family. In terms of tissue distribution, expressed in skeletal muscle, heart and brain. Brain expression is hippocampus-specific.

Its subcellular location is the cell membrane. The protein is Immunoglobulin superfamily DCC subclass member 4 (Igdcc4) of Mus musculus (Mouse).